The following is a 528-amino-acid chain: Phosphoenolpyruvate carboxykinase (ATP) (528 aa).

Substrate-binding residues include Arg-56, Tyr-192, and Lys-198. Residues Lys-198, His-217, and 233 to 241 (GLSGTGKTT) contribute to the ATP site. Positions 198 and 217 each coordinate Mn(2+). Residue Asp-254 coordinates Mn(2+). Glu-282, Arg-319, and Thr-444 together coordinate ATP. Arg-319 is a binding site for substrate.

It belongs to the phosphoenolpyruvate carboxykinase (ATP) family. It depends on Mn(2+) as a cofactor.

The protein localises to the cytoplasm. It carries out the reaction oxaloacetate + ATP = phosphoenolpyruvate + ADP + CO2. It functions in the pathway carbohydrate biosynthesis; gluconeogenesis. Its function is as follows. Involved in the gluconeogenesis. Catalyzes the conversion of oxaloacetate (OAA) to phosphoenolpyruvate (PEP) through direct phosphoryl transfer between the nucleoside triphosphate and OAA. This Bacillus cytotoxicus (strain DSM 22905 / CIP 110041 / 391-98 / NVH 391-98) protein is Phosphoenolpyruvate carboxykinase (ATP).